A 215-amino-acid polypeptide reads, in one-letter code: MKLVLLGAPGCGKGTISDYLVKNYGLVHLSTGDIFRQTIDQKGPYWEELKSYISKGLLVPDELTNKILKNALDKNMDKSFILDGCIRTIAQADFLSTILDIDLALYLEVPFDVLEKRLTGRRICSKCKRIYNIHYSAPKKEDICDDDGEFLIQRKDDQKEIIDERMKVYRTNSEPLIKYYEKLNKLVAINSENLDDLEKNIDDLFINKFNLRKIA.

ATP is bound at residue 10 to 15 (GCGKGT). The tract at residues 30–59 (STGDIFRQTIDQKGPYWEELKSYISKGLLV) is NMP. AMP contacts are provided by residues Thr-31, Arg-36, 57 to 59 (LLV), and Gln-91. The tract at residues 120-157 (GRRICSKCKRIYNIHYSAPKKEDICDDDGEFLIQRKDD) is LID. Arg-121 provides a ligand contact to ATP. Zn(2+) is bound by residues Cys-124 and Cys-127. Position 130–131 (130–131 (IY)) interacts with ATP. Positions 144 and 147 each coordinate Zn(2+). Residues Arg-154 and Arg-165 each contribute to the AMP site.

Belongs to the adenylate kinase family. In terms of assembly, monomer.

The protein localises to the cytoplasm. The catalysed reaction is AMP + ATP = 2 ADP. It functions in the pathway purine metabolism; AMP biosynthesis via salvage pathway; AMP from ADP: step 1/1. Functionally, catalyzes the reversible transfer of the terminal phosphate group between ATP and AMP. Plays an important role in cellular energy homeostasis and in adenine nucleotide metabolism. This Malacoplasma penetrans (strain HF-2) (Mycoplasma penetrans) protein is Adenylate kinase.